The sequence spans 443 residues: Type I restriction enzyme HindI methylase subunit (443 aa).

S-adenosyl-L-methionine contacts are provided by residues 117–122, 146–148, and E173; these read QYFTPK and SGG.

It belongs to the N(4)/N(6)-methyltransferase family. The type I restriction/modification system is composed of three polypeptides R, M and S; the restriction enzyme has stoichiometry R(2)M(2)S(1) while the methyltransferase is M(2)S(1).

The catalysed reaction is a 2'-deoxyadenosine in DNA + S-adenosyl-L-methionine = an N(6)-methyl-2'-deoxyadenosine in DNA + S-adenosyl-L-homocysteine + H(+). In terms of biological role, the subtype gamma methyltransferase (M) subunit of a type I restriction enzyme. The M and S subunits together form a methyltransferase (MTase) that methylates adenosines in the sequence 5'-RAACN(5)TAG-3'. Methylation protects against cleavage by HindI. In the presence of the R subunit the complex can also act as an endonuclease, binding to the same target sequence but cutting the DNA some distance from this site. Whether the DNA is cut or modified depends on the methylation state of the target sequence. When the target site is unmodified, the DNA is cut. When the target site is hemimethylated, the complex acts as a maintenance MTase modifying the DNA so that both strands become methylated. After locating a non-methylated recognition site, the enzyme complex serves as a molecular motor that translocates DNA in an ATP-dependent manner until a collision occurs that triggers cleavage. The chain is Type I restriction enzyme HindI methylase subunit from Haemophilus influenzae (strain ATCC 51907 / DSM 11121 / KW20 / Rd).